Reading from the N-terminus, the 328-residue chain is MSMANFTAGRNSCTFQEEFKQVLLPLVYSVVFLLGLPLNAVVIGQIWLARKALTRTTIYMLNLATADLLYVCSLPLLIYNYTQKDYWPFGDFTCKFVRFQFYTNLHGSILFLTCISVQRYMGICHPLASWHKKKGKKLTWLVCAAVWFIVIAQCLPTFVFASTGTQRNRTVCYDLSPPDRSASYFPYGITLTITGFLLPFAAILACYCSMARILCQKDELIGLAVHKKKDKAVRMIIIVVIVFSISFFPFHLTKTIYLIVRSSPTLPCPTLQAFAIAYKCTRPFASMNSVLDPILFYFTQRKFRESTRYLLDKMSSKWRHDHCITYGS.

The Extracellular portion of the chain corresponds to 1–22 (MSMANFTAGRNSCTFQEEFKQV). Asn5 is a glycosylation site (N-linked (GlcNAc...) asparagine). Residues 23 to 43 (LLPLVYSVVFLLGLPLNAVVI) traverse the membrane as a helical segment. Residues 44-57 (GQIWLARKALTRTT) are Cytoplasmic-facing. The chain crosses the membrane as a helical span at residues 58–78 (IYMLNLATADLLYVCSLPLLI). Topologically, residues 79-96 (YNYTQKDYWPFGDFTCKF) are extracellular. Cysteines 94 and 172 form a disulfide. The chain crosses the membrane as a helical span at residues 97 to 117 (VRFQFYTNLHGSILFLTCISV). Residues 118-139 (QRYMGICHPLASWHKKKGKKLT) are Cytoplasmic-facing. The chain crosses the membrane as a helical span at residues 140-160 (WLVCAAVWFIVIAQCLPTFVF). Over 161–189 (ASTGTQRNRTVCYDLSPPDRSASYFPYGI) the chain is Extracellular. The chain crosses the membrane as a helical span at residues 190 to 210 (TLTITGFLLPFAAILACYCSM). Topologically, residues 211–231 (ARILCQKDELIGLAVHKKKDK) are cytoplasmic. Residues 232–252 (AVRMIIIVVIVFSISFFPFHL) traverse the membrane as a helical segment. Residues 253-275 (TKTIYLIVRSSPTLPCPTLQAFA) lie on the Extracellular side of the membrane. The chain crosses the membrane as a helical span at residues 276–298 (IAYKCTRPFASMNSVLDPILFYF). Residues 299–323 (TQRKFRESTRYLLDKMSSKWRHDHC) lie on the Cytoplasmic side of the membrane.

It belongs to the G-protein coupled receptor 1 family.

The protein resides in the cell membrane. Its function is as follows. Receptor for extracellular UDP &gt; ADP = UTP. The activity of this receptor is mediated by G proteins which activate a phosphatidylinositol-calcium second messenger system. The protein is P2Y purinoceptor 3 (P2RY3) of Meleagris gallopavo (Wild turkey).